The following is a 653-amino-acid chain: Dystrotelin (653 aa).

The segment at 223–279 (THPVRCSVCRTFPIIGLRYHCLKCLDFDICELCFLSGLHKNSHEKSHTVMEECVQMS) adopts a ZZ-type zinc-finger fold. Residues Cys228, Cys231, Cys243, Cys246, Cys252, Cys255, His265, and His269 each coordinate Zn(2+). The stretch at 384-411 (RDSLNTLLRERRLLRKQLHRYKQKLQGT) forms a coiled coil.

In terms of tissue distribution, strongly expressed in the nervous and muscular tissues.

It is found in the cell membrane. The sequence is that of Dystrotelin (Dytn) from Mus musculus (Mouse).